Consider the following 864-residue polypeptide: Mitochondrial 15S rRNA processing factor CCM1 (864 aa).

The transit peptide at 1–76 (MYMARCGPKN…REFSNTLKER (76 aa)) directs the protein to the mitochondrion. Polar residues-rich tracts occupy residues 80–94 (TKSV…NSIA) and 102–112 (NVNVTKTSSVP). The interval 80 to 117 (TKSVNSDGHQSNSIAPISEDSRNVNVTKTSSVPNEEKS) is disordered. PPR repeat units lie at residues 319–353 (NKQN…STKH) and 356–390 (DICT…NIKP).

This sequence belongs to the CCM1 family. In terms of assembly, binds to mitochondrial small subunit 15S rRNA.

The protein localises to the mitochondrion. Functionally, regulates mitochondrial small subunit maturation by controlling 15S rRNA 5'-end processing. Localizes to the 5' precursor of the 15S rRNA in a position that is subsequently occupied by mS47 in the mature yeast mtSSU. Uses structure and sequence-specific RNA recognition, binding to a single-stranded region of the precursor and specifically recognizing bases -6 to -1. The exchange of Ccm1 for mS47 is coupled to the irreversible removal of precursor rRNA that is accompanied by conformational changes of the mitoribosomal proteins uS5m and mS26. These conformational changes signal completion of 5'-end rRNA processing through protection of the mature 5'-end of the 15S rRNA and stabilization of mS47. The removal of the 5' precursor together with the dissociation of Ccm1 may be catalyzed by the 5'-3' exoribonuclease Pet127. Involved in the specific removal of group I introns in mitochondrial encoded transcripts. The sequence is that of Mitochondrial 15S rRNA processing factor CCM1 from Saccharomyces cerevisiae (strain ATCC 204508 / S288c) (Baker's yeast).